A 372-amino-acid polypeptide reads, in one-letter code: Protein phosphatase Mn(2+)-dependent 1K (372 aa).

Residues 1–29 (MSTAALITLVRSGGNQVRRRVLLSSRLLQ) constitute a mitochondrion transit peptide. The disordered stretch occupies residues 34-55 (VTPTCHSSTSEPRCSRFDPDGS). Residues 46 to 61 (RCSRFDPDGSGSPATW) are critical for association with the BCKDH complex. Positions 94–346 (NVGCASQIGK…DNSTAVVVPF (253 aa)) constitute a PPM-type phosphatase domain. 2 residues coordinate Mn(2+): aspartate 127 and glycine 128. Phosphoserine is present on serine 248. Mn(2+) contacts are provided by aspartate 298 and aspartate 337.

Belongs to the PP2C family. As to quaternary structure, monomer. Interacts with E1 and E2 components of the branched-chain alpha-ketoacid dehydrogenase (BCKDH) complex; this interaction requires colocalization in mitochondria. Interacts with BCKDHA but not with BCKDHB of the E1 component. Interacts with the 24-meric E2 core composed of DBT monomers with a 24:1 stoichiometry; the N-terminal region (residues 49-61) of PPM1K and C-terminal linker of the lipoyl domain of DBT (residues 145-160) are critical for this interaction, whereas the lipoyl prosthetic group is dispensable. Competes with BCKDK for binding to the E2 core; this interaction is modulated by branched-chain alpha-keto acids. At steady state, BCKDH holoenzyme preferentially binds BCKDK and BCKDHA is phosphorylated. In response to high levels of branched-chain alpha-keto acids, the inhibitory BCKDK is replaced by activating PPM1K leading to BCKDHA dephosphorylation and BCAA degradation. It depends on Mn(2+) as a cofactor.

It localises to the mitochondrion matrix. It catalyses the reaction O-phospho-L-seryl-[3-methyl-2-oxobutanoate dehydrogenase] + H2O = L-seryl-[3-methyl-2-oxobutanoate dehydrogenase] + phosphate. The catalysed reaction is O-phospho-L-seryl-[protein] + H2O = L-seryl-[protein] + phosphate. It participates in protein modification. Up-regulated upon interaction with the 24-meric DBT/E2 core of the BCKDH complex. Inhibited by Mg(2+) and Ca(2+) ions likely by competing with Mn(2+) ions for binding to the same metal-binding sites. Functionally, serine/threonine-protein phosphatase component of macronutrients metabolism. Forms a functional kinase and phosphatase pair with BCKDK, serving as a metabolic regulatory node that coordinates branched-chain amino acids (BCAAs) with glucose and lipid metabolism via two distinct phosphoprotein targets: mitochondrial BCKDHA subunit of the branched-chain alpha-ketoacid dehydrogenase (BCKDH) complex and cytosolic ACLY, a lipogenic enzyme of Krebs cycle. At high levels of branched-chain ketoacids, dephosphorylates and activates mitochondrial BCKDH complex, a multisubunit complex consisting of three multimeric components each involved in different steps of BCAA catabolism: E1 composed of BCKDHA and BCKDHB, E2 core composed of DBT monomers, and E3 composed of DLD monomers. Tightly associates with the E2 component of BCKDH complex and dephosphorylates BCKDHA on Ser-337. Regulates the reversible phosphorylation of ACLY in response to changes in cellular carbohydrate abundance such as occurs during fasting to feeding metabolic transition. At fasting state, appears to dephosphorylate ACLY on Ser-455 and inactivate it. Refeeding stimulates MLXIPL/ChREBP transcription factor, leading to increased BCKDK to PPM1K expression ratio, phosphorylation and activation of ACLY that ultimately results in the generation of malonyl-CoA and oxaloacetate immediate substrates of de novo lipogenesis and gluconeogenesis, respectively. Recognizes phosphosites having SxS or RxxS motifs and strictly depends on Mn(2+) ions for the phosphatase activity. Regulates Ca(2+)-induced opening of mitochondrial transition pore and apoptotic cell death. In Homo sapiens (Human), this protein is Protein phosphatase Mn(2+)-dependent 1K.